A 63-amino-acid polypeptide reads, in one-letter code: Insect toxin TbIT-1 (63 aa).

Residues 2-63 (KEGYPVDSRG…VYDNASNKCB (62 aa)) enclose the LCN-type CS-alpha/beta domain. 4 cysteine pairs are disulfide-bonded: Cys12–Cys62, Cys16–Cys38, Cys24–Cys43, and Cys28–Cys45.

It belongs to the long (4 C-C) scorpion toxin superfamily. Sodium channel inhibitor family. Beta subfamily. In terms of tissue distribution, expressed by the venom gland.

The protein localises to the secreted. Functionally, beta toxins bind voltage-independently at site-4 of sodium channels (Nav) and shift the voltage of activation toward more negative potentials thereby affecting sodium channel activation and promoting spontaneous and repetitive firing. This toxin is only active against insects. The sequence is that of Insect toxin TbIT-1 from Tityus bahiensis (Brazilian scorpion).